The following is a 265-amino-acid chain: MDTAQKQRWAITLSYDGSRFYGWQKQAGGVPTVQAALETALARIAGESVATTVAGRTDTGVHAAAQVVHFDITAARPQQAWVRGVNAHLPEGIAVLHARQVAPGFHARFDAYGRHYRYLLESAPVRSPLLKNRAGWTHLKLDIEPMRRAAALLIGEQDFSSFRAAGCQAKSPVKTIYRTDLTQSAGLIRLDLHGNAFLHHMVRNIMGALVYVGSGRLSVEGFAALIQERSRLKAPPTFMPDGLYLTGVDYPGAYGIVRPQIPEWL.

Asp58 acts as the Nucleophile in catalysis. Residue Tyr116 participates in substrate binding.

This sequence belongs to the tRNA pseudouridine synthase TruA family. As to quaternary structure, homodimer.

It carries out the reaction uridine(38/39/40) in tRNA = pseudouridine(38/39/40) in tRNA. Its function is as follows. Formation of pseudouridine at positions 38, 39 and 40 in the anticodon stem and loop of transfer RNAs. This is tRNA pseudouridine synthase A from Neisseria gonorrhoeae (strain NCCP11945).